We begin with the raw amino-acid sequence, 319 residues long: Methionyl-tRNA formyltransferase (319 aa).

116 to 119 is a binding site for (6S)-5,6,7,8-tetrahydrofolate; sequence SLLP.

It belongs to the Fmt family.

It catalyses the reaction L-methionyl-tRNA(fMet) + (6R)-10-formyltetrahydrofolate = N-formyl-L-methionyl-tRNA(fMet) + (6S)-5,6,7,8-tetrahydrofolate + H(+). Attaches a formyl group to the free amino group of methionyl-tRNA(fMet). The formyl group appears to play a dual role in the initiator identity of N-formylmethionyl-tRNA by promoting its recognition by IF2 and preventing the misappropriation of this tRNA by the elongation apparatus. The chain is Methionyl-tRNA formyltransferase from Treponema pallidum (strain Nichols).